Here is a 353-residue protein sequence, read N- to C-terminus: Phosphate acyltransferase (353 aa).

This sequence belongs to the PlsX family. Homodimer. Probably interacts with PlsY.

The protein localises to the cytoplasm. It catalyses the reaction a fatty acyl-[ACP] + phosphate = an acyl phosphate + holo-[ACP]. It participates in lipid metabolism; phospholipid metabolism. Catalyzes the reversible formation of acyl-phosphate (acyl-PO(4)) from acyl-[acyl-carrier-protein] (acyl-ACP). This enzyme utilizes acyl-ACP as fatty acyl donor, but not acyl-CoA. The protein is Phosphate acyltransferase of Rhodopseudomonas palustris (strain ATCC BAA-98 / CGA009).